Consider the following 501-residue polypeptide: ATP synthase subunit alpha (501 aa).

169 to 176 (GDRQTGKT) serves as a coordination point for ATP.

It belongs to the ATPase alpha/beta chains family. F-type ATPases have 2 components, CF(1) - the catalytic core - and CF(0) - the membrane proton channel. CF(1) has five subunits: alpha(3), beta(3), gamma(1), delta(1), epsilon(1). CF(0) has three main subunits: a(1), b(2) and c(9-12). The alpha and beta chains form an alternating ring which encloses part of the gamma chain. CF(1) is attached to CF(0) by a central stalk formed by the gamma and epsilon chains, while a peripheral stalk is formed by the delta and b chains.

Its subcellular location is the cell membrane. It catalyses the reaction ATP + H2O + 4 H(+)(in) = ADP + phosphate + 5 H(+)(out). Functionally, produces ATP from ADP in the presence of a proton gradient across the membrane. The alpha chain is a regulatory subunit. In Streptococcus thermophilus (strain CNRZ 1066), this protein is ATP synthase subunit alpha.